Reading from the N-terminus, the 430-residue chain is Pre-mRNA-processing protein 45 (430 aa).

The span at 1 to 26 shows a compositional bias: polar residues; that stretch reads MSFRTLSSLLPSPQNSEVSESSAFSR. Disordered stretches follow at residues 1–28, 280–299, and 370–430; these read MSFR…SRQS, MERN…NKMS, and PTTG…PHTS.

The protein belongs to the SNW family. As to quaternary structure, associated with the spliceosome.

It is found in the nucleus. Involved in pre-mRNA splicing. The chain is Pre-mRNA-processing protein 45 (PRP45) from Kluyveromyces lactis (strain ATCC 8585 / CBS 2359 / DSM 70799 / NBRC 1267 / NRRL Y-1140 / WM37) (Yeast).